Here is a 456-residue protein sequence, read N- to C-terminus: MTYFFETYGCQMNVAESASVEQLLLARGWTKAVDAQTCDVLIINTCSVRITAETRVFGRLGLFSSLKKKRAFFIILMGCMAQRLHDKIQQQFPRIDYVVGTFAHARFESIFQEIEQKLTQKDYRFEFISERYREHPVSGYRFFASSYSEGSFQSFIPIMNGCNNFCSFCIVPYVRGREISRDLDAILQEVDVLSEKGVREITLLGQNVNSYRGRDREGNIVTFPQLLRHLVRRCEVKDQIKWIRFVSSHPKDLSDDLIATIAQESRLCRLVHLPVQHGANGVLKRMRRSYTREQYLSLVGKLKASVPNVALSTDILIGFPGETEEDFEQTLDLMREVEFDSAFMYHYNPREGTPAYDFPDRIPDATRIARLQRVIALQMSTTLKKMRARVGKTLPVLVESRSRNNPEELFGHTELGEMTVLEGKVDPTYIGRFVDVQVKEVRGRTLRAHLVQERAK.

In terms of domain architecture, MTTase N-terminal spans 1-116; sequence MTYFFETYGC…FESIFQEIEQ (116 aa). Residues C10, C46, C79, C162, C166, and C169 each contribute to the [4Fe-4S] cluster site. In terms of domain architecture, Radical SAM core spans 148 to 384; sequence SEGSFQSFIP…IALQMSTTLK (237 aa). Residues 387–452 form the TRAM domain; sequence RARVGKTLPV…GRTLRAHLVQ (66 aa).

It belongs to the methylthiotransferase family. MiaB subfamily. Monomer. The cofactor is [4Fe-4S] cluster.

Its subcellular location is the cytoplasm. It carries out the reaction N(6)-dimethylallyladenosine(37) in tRNA + (sulfur carrier)-SH + AH2 + 2 S-adenosyl-L-methionine = 2-methylsulfanyl-N(6)-dimethylallyladenosine(37) in tRNA + (sulfur carrier)-H + 5'-deoxyadenosine + L-methionine + A + S-adenosyl-L-homocysteine + 2 H(+). Functionally, catalyzes the methylthiolation of N6-(dimethylallyl)adenosine (i(6)A), leading to the formation of 2-methylthio-N6-(dimethylallyl)adenosine (ms(2)i(6)A) at position 37 in tRNAs that read codons beginning with uridine. This is tRNA-2-methylthio-N(6)-dimethylallyladenosine synthase from Treponema pallidum (strain Nichols).